We begin with the raw amino-acid sequence, 182 residues long: Large ribosomal subunit protein uL5 (182 aa).

In terms of assembly, part of the 50S ribosomal subunit; part of the 5S rRNA/uL5/uL18/bL25 (TL7) subcomplex; has also been isolated as a complex with 5S rRNA, bL25 (TL7) and DNA binding protein II. Forms a bridge to the 30S subunit in the 70S ribosome, contacting protein uS13; this bridge is straddled by the 5S rRNA. Contacts the P site tRNA.

In terms of biological role, this is one of the proteins that bind and probably mediate the attachment of the 5S RNA into the large ribosomal subunit, where it forms part of the central protuberance. In the 70S ribosome it contacts protein S13 of the 30S subunit (forming bridge B1b) connecting the head of the 30S subunit to the top of the 50S subunit. The bridge itself contacts the P site tRNA and is implicated in movement during ribosome translocation. Also contacts the P site tRNA independently of the intersubunit bridge; the 5S rRNA and some of its associated proteins might help stabilize positioning of ribosome-bound tRNAs. The protein is Large ribosomal subunit protein uL5 (rplE) of Thermus thermophilus (strain ATCC 27634 / DSM 579 / HB8).